Reading from the N-terminus, the 350-residue chain is Histidinol-phosphate aminotransferase (350 aa).

Lysine 209 carries the N6-(pyridoxal phosphate)lysine modification.

It belongs to the class-II pyridoxal-phosphate-dependent aminotransferase family. Histidinol-phosphate aminotransferase subfamily. As to quaternary structure, homodimer. The cofactor is pyridoxal 5'-phosphate.

The enzyme catalyses L-histidinol phosphate + 2-oxoglutarate = 3-(imidazol-4-yl)-2-oxopropyl phosphate + L-glutamate. Its pathway is amino-acid biosynthesis; L-histidine biosynthesis; L-histidine from 5-phospho-alpha-D-ribose 1-diphosphate: step 7/9. The chain is Histidinol-phosphate aminotransferase from Geobacter sp. (strain M21).